The following is a 279-amino-acid chain: Phosphatidylglycerol--prolipoprotein diacylglyceryl transferase (279 aa).

Helical transmembrane passes span 18–38, 55–75, and 89–109; these read LSVR…YFVA, IIFY…VIFQ, and IWHG…AGVI. Residue R137 coordinates a 1,2-diacyl-sn-glycero-3-phospho-(1'-sn-glycerol). The next 2 membrane-spanning stretches (helical) occupy residues 203 to 223 and 235 to 255; these read LGET…FIEG and IRVA…LIVY.

This sequence belongs to the Lgt family.

Its subcellular location is the cell membrane. The enzyme catalyses L-cysteinyl-[prolipoprotein] + a 1,2-diacyl-sn-glycero-3-phospho-(1'-sn-glycerol) = an S-1,2-diacyl-sn-glyceryl-L-cysteinyl-[prolipoprotein] + sn-glycerol 1-phosphate + H(+). The protein operates within protein modification; lipoprotein biosynthesis (diacylglyceryl transfer). Functionally, catalyzes the transfer of the diacylglyceryl group from phosphatidylglycerol to the sulfhydryl group of the N-terminal cysteine of a prolipoprotein, the first step in the formation of mature lipoproteins. The protein is Phosphatidylglycerol--prolipoprotein diacylglyceryl transferase of Staphylococcus aureus (strain Mu3 / ATCC 700698).